We begin with the raw amino-acid sequence, 169 residues long: NADH-quinone oxidoreductase subunit B (169 aa).

Residues Cys-42, Cys-43, Cys-107, and Cys-136 each contribute to the [4Fe-4S] cluster site.

The protein belongs to the complex I 20 kDa subunit family. As to quaternary structure, NDH-1 is composed of 14 different subunits. Subunits NuoB, C, D, E, F, and G constitute the peripheral sector of the complex. The cofactor is [4Fe-4S] cluster.

It localises to the cell inner membrane. It carries out the reaction a quinone + NADH + 5 H(+)(in) = a quinol + NAD(+) + 4 H(+)(out). In terms of biological role, NDH-1 shuttles electrons from NADH, via FMN and iron-sulfur (Fe-S) centers, to quinones in the respiratory chain. The immediate electron acceptor for the enzyme in this species is believed to be ubiquinone. Couples the redox reaction to proton translocation (for every two electrons transferred, four hydrogen ions are translocated across the cytoplasmic membrane), and thus conserves the redox energy in a proton gradient. The chain is NADH-quinone oxidoreductase subunit B from Sulfurimonas denitrificans (strain ATCC 33889 / DSM 1251) (Thiomicrospira denitrificans (strain ATCC 33889 / DSM 1251)).